The sequence spans 42 residues: Photosystem II reaction center protein J (42 aa).

Residues 10 to 30 (IPLWLVGTVVGTLAIGLLAVF) form a helical membrane-spanning segment.

This sequence belongs to the PsbJ family. As to quaternary structure, PSII is composed of 1 copy each of membrane proteins PsbA, PsbB, PsbC, PsbD, PsbE, PsbF, PsbH, PsbI, PsbJ, PsbK, PsbL, PsbM, PsbT, PsbX, PsbY, PsbZ, Psb30/Ycf12, at least 3 peripheral proteins of the oxygen-evolving complex and a large number of cofactors. It forms dimeric complexes.

It is found in the plastid. Its subcellular location is the chloroplast thylakoid membrane. In terms of biological role, one of the components of the core complex of photosystem II (PSII). PSII is a light-driven water:plastoquinone oxidoreductase that uses light energy to abstract electrons from H(2)O, generating O(2) and a proton gradient subsequently used for ATP formation. It consists of a core antenna complex that captures photons, and an electron transfer chain that converts photonic excitation into a charge separation. This chain is Photosystem II reaction center protein J, found in Chlamydomonas reinhardtii (Chlamydomonas smithii).